Here is a 50-residue protein sequence, read N- to C-terminus: Penaeidin-1 (50 aa).

Intrachain disulfides connect cysteine 25-cysteine 38, cysteine 27-cysteine 45, and cysteine 39-cysteine 46.

Higher expression in hemocytes and to a lesser extent in heart, testis, gills, intestine, lymphoid organ and hepatopancreas. Traces in eyes and subcuticular epithelium. Not present in the brain.

The protein localises to the cytoplasmic granule. In terms of biological role, antibacterial activity against M.luteus and E.coli bacteria. Antifungal activity against N.crassa and F.oxysporum. Presents chitin-binding activity. The sequence is that of Penaeidin-1 from Penaeus vannamei (Whiteleg shrimp).